We begin with the raw amino-acid sequence, 187 residues long: Probable chorismate pyruvate-lyase (187 aa).

3 residues coordinate substrate: Arg76, Leu114, and Glu173.

This sequence belongs to the UbiC family.

It is found in the cytoplasm. It catalyses the reaction chorismate = 4-hydroxybenzoate + pyruvate. It participates in cofactor biosynthesis; ubiquinone biosynthesis. Removes the pyruvyl group from chorismate, with concomitant aromatization of the ring, to provide 4-hydroxybenzoate (4HB) for the ubiquinone pathway. This is Probable chorismate pyruvate-lyase from Shewanella amazonensis (strain ATCC BAA-1098 / SB2B).